Reading from the N-terminus, the 969-residue chain is RNA polymerase-associated protein RapA (969 aa).

The Helicase ATP-binding domain occupies E162–D339. D175–T182 provides a ligand contact to ATP. The short motif at D285–H288 is the DEAH box element. The region spanning R492–G663 is the Helicase C-terminal domain.

This sequence belongs to the SNF2/RAD54 helicase family. RapA subfamily. Interacts with the RNAP. Has a higher affinity for the core RNAP than for the holoenzyme. Its ATPase activity is stimulated by binding to RNAP.

Functionally, transcription regulator that activates transcription by stimulating RNA polymerase (RNAP) recycling in case of stress conditions such as supercoiled DNA or high salt concentrations. Probably acts by releasing the RNAP, when it is trapped or immobilized on tightly supercoiled DNA. Does not activate transcription on linear DNA. Probably not involved in DNA repair. The polypeptide is RNA polymerase-associated protein RapA (Actinobacillus pleuropneumoniae serotype 3 (strain JL03)).